The sequence spans 128 residues: 3-aminoacrylate deaminase RutC (128 aa).

It belongs to the RutC family. In terms of assembly, homotrimer.

The catalysed reaction is (Z)-3-aminoacrylate + H2O + H(+) = 3-oxopropanoate + NH4(+). Functionally, involved in pyrimidine catabolism. Catalyzes the deamination of 3-aminoacrylate to malonic semialdehyde, a reaction that can also occur spontaneously. RutC may facilitate the reaction and modulate the metabolic fitness, rather than catalyzing essential functions. In Shigella flexneri serotype X (strain 2002017), this protein is 3-aminoacrylate deaminase RutC.